The sequence spans 270 residues: 3-phenylpropionate-dihydrodiol/cinnamic acid-dihydrodiol dehydrogenase (270 aa).

Phe10 to Ala34 serves as a coordination point for NAD(+). A substrate-binding site is contributed by Ser143. Residue Tyr156 is the Proton acceptor of the active site.

It belongs to the short-chain dehydrogenases/reductases (SDR) family.

It catalyses the reaction 3-(cis-5,6-dihydroxycyclohexa-1,3-dien-1-yl)propanoate + NAD(+) = 3-(2,3-dihydroxyphenyl)propanoate + NADH + H(+). The catalysed reaction is (2E)-3-(cis-5,6-dihydroxycyclohexa-1,3-dien-1-yl)prop-2-enoate + NAD(+) = (2E)-3-(2,3-dihydroxyphenyl)prop-2-enoate + NADH + H(+). It functions in the pathway aromatic compound metabolism; 3-phenylpropanoate degradation. Functionally, converts 3-phenylpropionate-dihydrodiol (PP-dihydrodiol) and cinnamic acid-dihydrodiol (CI-dihydrodiol) into 3-(2,3-dihydroxylphenyl)propanoic acid (DHPP) and 2,3-dihydroxicinnamic acid (DHCI), respectively. The chain is 3-phenylpropionate-dihydrodiol/cinnamic acid-dihydrodiol dehydrogenase from Escherichia coli O157:H7.